A 113-amino-acid chain; its full sequence is Large ribosomal subunit protein uL22 (113 aa).

This sequence belongs to the universal ribosomal protein uL22 family. In terms of assembly, part of the 50S ribosomal subunit.

This protein binds specifically to 23S rRNA; its binding is stimulated by other ribosomal proteins, e.g. L4, L17, and L20. It is important during the early stages of 50S assembly. It makes multiple contacts with different domains of the 23S rRNA in the assembled 50S subunit and ribosome. Functionally, the globular domain of the protein is located near the polypeptide exit tunnel on the outside of the subunit, while an extended beta-hairpin is found that lines the wall of the exit tunnel in the center of the 70S ribosome. This is Large ribosomal subunit protein uL22 from Roseiflexus castenholzii (strain DSM 13941 / HLO8).